The primary structure comprises 292 residues: 4-hydroxybenzoate octaprenyltransferase (292 aa).

9 helical membrane passes run 24–44 (IGTLLLLWPTYWALWLANAGM), 47–67 (LTNFIVFTLGVVIMRSAGCVI), 97–117 (AISLFILLITVAFLLVLMLSV), 119–139 (TILLSFGALALAFCYPFMKRY), 145–165 (VVLGAAFGWAIPMAFMASINA), 171–191 (WLLFIANICWTVAYDTMYAMV), 214–234 (HIIGLLNLAFIALMLSIGALN), 238–258 (LSYWLGLSVAIVLLVYQQVLI), and 270–290 (FLNNHYVGLAFFIGLLFSYPV).

The protein belongs to the UbiA prenyltransferase family. The cofactor is Mg(2+).

It localises to the cell inner membrane. The enzyme catalyses all-trans-octaprenyl diphosphate + 4-hydroxybenzoate = 4-hydroxy-3-(all-trans-octaprenyl)benzoate + diphosphate. The protein operates within cofactor biosynthesis; ubiquinone biosynthesis. Its function is as follows. Catalyzes the prenylation of para-hydroxybenzoate (PHB) with an all-trans polyprenyl group. Mediates the second step in the final reaction sequence of ubiquinone-8 (UQ-8) biosynthesis, which is the condensation of the polyisoprenoid side chain with PHB, generating the first membrane-bound Q intermediate 3-octaprenyl-4-hydroxybenzoate. The polypeptide is 4-hydroxybenzoate octaprenyltransferase (Pseudoalteromonas translucida (strain TAC 125)).